The following is a 344-amino-acid chain: Oxygen sensor histidine kinase NreB (344 aa).

Cysteine 58, cysteine 61, cysteine 73, and cysteine 76 together coordinate [4Fe-4S] cluster. A Histidine kinase domain is found at 147–344 (ENERKRISRE…GTIITLDIPI (198 aa)). A Phosphohistidine; by autocatalysis modification is found at histidine 158.

It depends on [4Fe-4S] cluster as a cofactor. Post-translationally, autophosphorylated.

It is found in the cytoplasm. It carries out the reaction ATP + protein L-histidine = ADP + protein N-phospho-L-histidine.. Its function is as follows. Member of the two-component regulatory system NreB/NreC involved in the control of dissimilatory nitrate/nitrite reduction in response to oxygen. NreB functions as a direct oxygen sensor histidine kinase which is autophosphorylated, in the absence of oxygen, probably at the conserved histidine residue, and transfers its phosphate group probably to a conserved aspartate residue of NreC. NreB/NreC activates the expression of the nitrate (narGHJI) and nitrite (nir) reductase operons, as well as the putative nitrate transporter gene narT. In Staphylococcus epidermidis (strain ATCC 12228 / FDA PCI 1200), this protein is Oxygen sensor histidine kinase NreB (nreB).